We begin with the raw amino-acid sequence, 240 residues long: Putative outer membrane protein RT0057 (240 aa).

The N-terminal stretch at methionine 1 to alanine 20 is a signal peptide.

This sequence belongs to the OmpW/AlkL family.

The protein localises to the cell outer membrane. This chain is Putative outer membrane protein RT0057, found in Rickettsia typhi (strain ATCC VR-144 / Wilmington).